We begin with the raw amino-acid sequence, 257 residues long: Acetylglutamate kinase (257 aa).

Residues 40-41 (GG), R62, and N155 contribute to the substrate site.

Belongs to the acetylglutamate kinase family. ArgB subfamily.

Its subcellular location is the cytoplasm. The enzyme catalyses N-acetyl-L-glutamate + ATP = N-acetyl-L-glutamyl 5-phosphate + ADP. It functions in the pathway amino-acid biosynthesis; L-arginine biosynthesis; N(2)-acetyl-L-ornithine from L-glutamate: step 2/4. In terms of biological role, catalyzes the ATP-dependent phosphorylation of N-acetyl-L-glutamate. The chain is Acetylglutamate kinase from Shouchella clausii (strain KSM-K16) (Alkalihalobacillus clausii).